Reading from the N-terminus, the 582-residue chain is Aspartate--tRNA ligase (582 aa).

Residue Glu-174 coordinates L-aspartate. The segment at 198-201 (QITK) is aspartate. An L-aspartate-binding site is contributed by Arg-220. ATP is bound by residues 220–222 (RDE) and Gln-229. His-443 lines the L-aspartate pocket. Glu-477 lines the ATP pocket. Arg-484 serves as a coordination point for L-aspartate. 529 to 532 (GLDR) provides a ligand contact to ATP.

It belongs to the class-II aminoacyl-tRNA synthetase family. Type 1 subfamily. Homodimer.

It is found in the cytoplasm. The catalysed reaction is tRNA(Asp) + L-aspartate + ATP = L-aspartyl-tRNA(Asp) + AMP + diphosphate. Catalyzes the attachment of L-aspartate to tRNA(Asp) in a two-step reaction: L-aspartate is first activated by ATP to form Asp-AMP and then transferred to the acceptor end of tRNA(Asp). The polypeptide is Aspartate--tRNA ligase (Streptococcus equi subsp. zooepidemicus (strain MGCS10565)).